Here is a 427-residue protein sequence, read N- to C-terminus: 3-phosphoshikimate 1-carboxyvinyltransferase (427 aa).

K22, S23, and R27 together coordinate 3-phosphoshikimate. K22 is a phosphoenolpyruvate binding site. Positions 96 and 124 each coordinate phosphoenolpyruvate. 3-phosphoshikimate contacts are provided by S169, S170, Q171, S197, D313, N336, and K340. Q171 contacts phosphoenolpyruvate. Catalysis depends on D313, which acts as the Proton acceptor. The phosphoenolpyruvate site is built by R344, R386, and K411.

Belongs to the EPSP synthase family. Monomer.

It localises to the cytoplasm. The catalysed reaction is 3-phosphoshikimate + phosphoenolpyruvate = 5-O-(1-carboxyvinyl)-3-phosphoshikimate + phosphate. The protein operates within metabolic intermediate biosynthesis; chorismate biosynthesis; chorismate from D-erythrose 4-phosphate and phosphoenolpyruvate: step 6/7. Its function is as follows. Catalyzes the transfer of the enolpyruvyl moiety of phosphoenolpyruvate (PEP) to the 5-hydroxyl of shikimate-3-phosphate (S3P) to produce enolpyruvyl shikimate-3-phosphate and inorganic phosphate. This is 3-phosphoshikimate 1-carboxyvinyltransferase from Shigella dysenteriae.